The primary structure comprises 351 residues: Glucose 1-dehydrogenase 1 (351 aa).

Residue cysteine 39 participates in Zn(2+) binding. Threonine 41 contributes to the substrate binding site. Residues histidine 64 and glutamate 65 each coordinate Zn(2+). Residues glutamate 113 and glutamate 149 each contribute to the substrate site. Glutamate 149 serves as a coordination point for Zn(2+). Residues 182–185 (AGPI), 265–267 (LGI), and 292–294 (ATN) contribute to the NADP(+) site. A substrate-binding site is contributed by asparagine 294.

This sequence belongs to the zinc-containing alcohol dehydrogenase family. Glucose 1-dehydrogenase subfamily. It depends on Zn(2+) as a cofactor.

The enzyme catalyses D-glucose + NAD(+) = D-glucono-1,5-lactone + NADH + H(+). It catalyses the reaction D-glucose + NADP(+) = D-glucono-1,5-lactone + NADPH + H(+). Its function is as follows. Catalyzes the NAD(P)(+)-dependent oxidation of D-glucose to D-gluconate via gluconolactone. Can utilize both NAD(+) and NADP(+) as electron acceptor. Is involved in the degradation of glucose through a non-phosphorylative variant of the Entner-Doudoroff pathway. This chain is Glucose 1-dehydrogenase 1, found in Vulcanisaeta moutnovskia (strain 768-28).